We begin with the raw amino-acid sequence, 113 residues long: uncharacterized protein (113 aa).

It is found in the cytoplasm. The protein localises to the nucleus. This is an uncharacterized protein from Saccharomyces cerevisiae (strain ATCC 204508 / S288c) (Baker's yeast).